A 552-amino-acid polypeptide reads, in one-letter code: Urocanate hydratase (552 aa).

NAD(+)-binding positions include 49-50, Gln-127, 173-175, Asp-193, 239-240, 260-264, 270-271, and Tyr-319; these read GG, GMG, NA, QTSAH, and YI. The active site involves Cys-407. Residue Gly-489 participates in NAD(+) binding.

Belongs to the urocanase family. Requires NAD(+) as cofactor.

It localises to the cytoplasm. It carries out the reaction 4-imidazolone-5-propanoate = trans-urocanate + H2O. It participates in amino-acid degradation; L-histidine degradation into L-glutamate; N-formimidoyl-L-glutamate from L-histidine: step 2/3. In terms of biological role, catalyzes the conversion of urocanate to 4-imidazolone-5-propionate. In Bacillus cereus (strain 03BB102), this protein is Urocanate hydratase.